The sequence spans 1238 residues: DNA-directed RNA polymerase subunit beta (1238 aa).

The tract at residues 1186 to 1238 is disordered; it reads IEGREDTPPEEVYEEGYEEGFEEESEELPEDIDFEPDSFDIENDDLDLEDFDI. Residues 1193–1238 are compositionally biased toward acidic residues; that stretch reads PPEEVYEEGYEEGFEEESEELPEDIDFEPDSFDIENDDLDLEDFDI.

This sequence belongs to the RNA polymerase beta chain family. The RNAP catalytic core consists of 2 alpha, 1 beta, 1 beta' and 1 omega subunit. When a sigma factor is associated with the core the holoenzyme is formed, which can initiate transcription.

The catalysed reaction is RNA(n) + a ribonucleoside 5'-triphosphate = RNA(n+1) + diphosphate. In terms of biological role, DNA-dependent RNA polymerase catalyzes the transcription of DNA into RNA using the four ribonucleoside triphosphates as substrates. The sequence is that of DNA-directed RNA polymerase subunit beta from Thermoanaerobacter sp. (strain X514).